A 308-amino-acid chain; its full sequence is MHKDDILKELKKVLPEEIIKVDEPLKRYTYTQTGGNADFYLSPTTNEQVQAINHLARMNNIPVTYLGNGSNIIIREGGIRGIVLSLLSMDYIKVEDNVIIAGSGAAIIDVSRKARDYSLTGLEFACGIPGSIGGAVFMNAGAYGGEVRDCIEHAVCVNERGEIVTLTRDELELGYRSSIVQKQHLVVLEASFNLAPGNQEEIQSVMDDLTNRRETKQPLEYPSCGSVFQRPPGHFAGKLIQDSELQGHRIGGVEVSKKHAGFMVNVDNGTATDYEDLIHHVQNVVKEKFDVELHPEVRIIGDHPEEHQ.

The region spanning 33–197 is the FAD-binding PCMH-type domain; it reads TGGNADFYLS…LEASFNLAPG (165 aa). The active site involves Arg-176. Ser-226 acts as the Proton donor in catalysis. Glu-296 is an active-site residue.

It belongs to the MurB family. FAD is required as a cofactor.

The protein resides in the cytoplasm. The enzyme catalyses UDP-N-acetyl-alpha-D-muramate + NADP(+) = UDP-N-acetyl-3-O-(1-carboxyvinyl)-alpha-D-glucosamine + NADPH + H(+). The protein operates within cell wall biogenesis; peptidoglycan biosynthesis. Its function is as follows. Cell wall formation. The polypeptide is UDP-N-acetylenolpyruvoylglucosamine reductase (Staphylococcus carnosus (strain TM300)).